An 863-amino-acid polypeptide reads, in one-letter code: Bifunctional uridylyltransferase/uridylyl-removing enzyme (863 aa).

Residues 1–328 form a uridylyltransferase region; sequence MLFSPTLSSP…PSNQDTVIDQ (328 aa). Residues 329–687 form a uridylyl-removing region; sequence LDDDFQLINQ…ISNRFSLGGT (359 aa). The region spanning 446–568 is the HD domain; it reads VDEHTLRVML…VQNQVRLDYL (123 aa). 2 ACT domains span residues 688-772 and 794-863; these read EVFI…PNRQ and QMEL…RNIG.

This sequence belongs to the GlnD family. It depends on Mg(2+) as a cofactor.

The enzyme catalyses [protein-PII]-L-tyrosine + UTP = [protein-PII]-uridylyl-L-tyrosine + diphosphate. The catalysed reaction is [protein-PII]-uridylyl-L-tyrosine + H2O = [protein-PII]-L-tyrosine + UMP + H(+). Uridylyltransferase (UTase) activity is inhibited by glutamine, while glutamine activates uridylyl-removing (UR) activity. Modifies, by uridylylation and deuridylylation, the PII regulatory proteins (GlnB and homologs), in response to the nitrogen status of the cell that GlnD senses through the glutamine level. Under low glutamine levels, catalyzes the conversion of the PII proteins and UTP to PII-UMP and PPi, while under higher glutamine levels, GlnD hydrolyzes PII-UMP to PII and UMP (deuridylylation). Thus, controls uridylylation state and activity of the PII proteins, and plays an important role in the regulation of nitrogen assimilation and metabolism. The sequence is that of Bifunctional uridylyltransferase/uridylyl-removing enzyme from Haemophilus influenzae (strain 86-028NP).